A 151-amino-acid chain; its full sequence is MKLLILALCFAAASALTADQISTVQSSFAGVKGDAVGILYAVFKADPSIQAKFTQFAGKDLDSIKGSADFSAHANKIVGFFSKIIGDLPNIDGDVTTFVASHTPRGVTHDQLNNFRAGFVSYMKAHTDFAGAEAAWGATLDAFFGMVFAKM.

An N-terminal signal peptide occupies residues 1 to 15; sequence MKLLILALCFAAASA. The region spanning 16 to 151 is the Globin domain; the sequence is LTADQISTVQ…AFFGMVFAKM (136 aa). Residue histidine 102 coordinates heme b.

The protein belongs to the globin family. As to quaternary structure, monomer.

In Chironomus thummi thummi (Midge), this protein is Globin CTT-IV (D).